The primary structure comprises 309 residues: L-aminoadipate-semialdehyde dehydrogenase-phosphopantetheinyl transferase (309 aa).

CoA-binding positions include arginine 47, 86-91, and 108-111; these read RTAKGK and NISH. Mg(2+)-binding residues include aspartate 129 and glutamate 181. Residue 181–185 coordinates CoA; it reads ESFIK. Phosphoserine is present on serine 258.

Belongs to the P-Pant transferase superfamily. AcpS family. Monomer. Requires Mg(2+) as cofactor.

It is found in the cytoplasm. Its subcellular location is the cytosol. The enzyme catalyses apo-[ACP] + CoA = holo-[ACP] + adenosine 3',5'-bisphosphate + H(+). It catalyses the reaction apo-[ACP] + acetyl-CoA = acetyl-[ACP] + adenosine 3',5'-bisphosphate + H(+). In terms of biological role, catalyzes the post-translational modification of target proteins by phosphopantetheine. Can transfer the 4'-phosphopantetheine moiety from coenzyme A, regardless of whether the CoA is presented in the free thiol form or as an acetyl thioester, to a serine residue of a broad range of acceptors including the acyl carrier domain of FASN. This chain is L-aminoadipate-semialdehyde dehydrogenase-phosphopantetheinyl transferase (AASDHPPT), found in Pongo abelii (Sumatran orangutan).